A 232-amino-acid polypeptide reads, in one-letter code: Large ribosomal subunit protein uL1 (232 aa).

It belongs to the universal ribosomal protein uL1 family. In terms of assembly, part of the 50S ribosomal subunit.

Functionally, binds directly to 23S rRNA. The L1 stalk is quite mobile in the ribosome, and is involved in E site tRNA release. In terms of biological role, protein L1 is also a translational repressor protein, it controls the translation of the L11 operon by binding to its mRNA. The sequence is that of Large ribosomal subunit protein uL1 from Xanthomonas axonopodis pv. citri (strain 306).